The primary structure comprises 92 residues: MASLGRKFFAVGVLSRVFPSAFNAQKGLLKNASMFLTPAFRLSPSLLPWNFSRGFKVKASVKKRCSSCYFVRRKGRLYVLCKKHPRHKTRQG.

A mitochondrion-targeting transit peptide spans 1 to 54 (MASLGRKFFAVGVLSRVFPSAFNAQKGLLKNASMFLTPAFRLSPSLLPWNFSRG).

It belongs to the bacterial ribosomal protein bL36 family. Component of the mitochondrial large ribosomal subunit (mt-LSU). Mature yeast 74S mitochondrial ribosomes consist of a small (37S) and a large (54S) subunit. The 37S small subunit contains a 15S ribosomal RNA (15S mt-rRNA) and at least 32 different proteins. The 54S large subunit contains a 21S rRNA (21S mt-rRNA) and at least 45 different proteins. bL36m has a zinc binding site.

It is found in the mitochondrion. Component of the mitochondrial ribosome (mitoribosome), a dedicated translation machinery responsible for the synthesis of mitochondrial genome-encoded proteins, including at least some of the essential transmembrane subunits of the mitochondrial respiratory chain. The mitoribosomes are attached to the mitochondrial inner membrane and translation products are cotranslationally integrated into the membrane. bL36m may be involved in a process influencing telomere capping. This is Large ribosomal subunit protein bL36m (rtc6) from Schizosaccharomyces pombe (strain 972 / ATCC 24843) (Fission yeast).